The sequence spans 473 residues: Serine palmitoyltransferase 1 (473 aa).

Residues 1–66 (MATATEQWVL…KEELIEEWQP (66 aa)) are interaction with SPTLC2. A helical transmembrane segment spans residues 16–36 (ALYEAPAYHLILEGILILWII). Position 164 is a phosphotyrosine; by ABL (Tyr-164).

The protein belongs to the class-II pyridoxal-phosphate-dependent aminotransferase family. Component of the serine palmitoyltransferase (SPT) complex, which is also composed of SPTLC2 or SPTLC3 and SPTSSA or SPTSSB. The heterodimer with SPTLC2 or SPTLC3 forms the catalytic core of the enzyme, while SPTSSA or SPTSSB subunits determine substrate specificity. SPT also interacts with ORMDL proteins, especially ORMDL3, which negatively regulate SPT activity in the presence of ceramides. Forms dimers of heterodimers with SPTLC2. Interacts with RTN4. Requires pyridoxal 5'-phosphate as cofactor. Post-translationally, phosphorylation at Tyr-164 inhibits activity and promotes cell survival.

Its subcellular location is the endoplasmic reticulum membrane. It catalyses the reaction L-serine + hexadecanoyl-CoA + H(+) = 3-oxosphinganine + CO2 + CoA. The enzyme catalyses octadecanoyl-CoA + L-serine + H(+) = 3-oxoeicosasphinganine + CO2 + CoA. It carries out the reaction tetradecanoyl-CoA + L-serine + H(+) = 3-oxohexadecasphinganine + CO2 + CoA. The catalysed reaction is dodecanoyl-CoA + L-serine + H(+) = 3-oxotetradecasphinganine + CO2 + CoA. It functions in the pathway lipid metabolism; sphingolipid metabolism. Its activity is regulated as follows. SPT complex catalytic activity is negatively regulated by ORMDL proteins, including ORMDL3, in the presence of ceramides. This mechanism allows to maintain ceramide levels at sufficient concentrations for the production of complex sphingolipids, but which prevents the accumulation of ceramides to levels that trigger apoptosis. Component of the serine palmitoyltransferase multisubunit enzyme (SPT) that catalyzes the initial and rate-limiting step in sphingolipid biosynthesis by condensing L-serine and activated acyl-CoA (most commonly palmitoyl-CoA) to form long-chain bases. The SPT complex is also composed of SPTLC2 or SPTLC3 and SPTSSA or SPTSSB. Within this complex, the heterodimer with SPTLC2 or SPTLC3 forms the catalytic core. The composition of the serine palmitoyltransferase (SPT) complex determines the substrate preference. The SPTLC1-SPTLC2-SPTSSA complex shows a strong preference for C16-CoA substrate, while the SPTLC1-SPTLC3-SPTSSA isozyme uses both C14-CoA and C16-CoA as substrates, with a slight preference for C14-CoA. The SPTLC1-SPTLC2-SPTSSB complex shows a strong preference for C18-CoA substrate, while the SPTLC1-SPTLC3-SPTSSB isozyme displays an ability to use a broader range of acyl-CoAs, without apparent preference. Required for adipocyte cell viability and metabolic homeostasis. The sequence is that of Serine palmitoyltransferase 1 (SPTLC1) from Pongo abelii (Sumatran orangutan).